The sequence spans 218 residues: Deoxyribose-phosphate aldolase (218 aa).

The Proton donor/acceptor role is filled by aspartate 92. The Schiff-base intermediate with acetaldehyde role is filled by lysine 155. Lysine 184 acts as the Proton donor/acceptor in catalysis.

Belongs to the DeoC/FbaB aldolase family. DeoC type 1 subfamily.

Its subcellular location is the cytoplasm. The enzyme catalyses 2-deoxy-D-ribose 5-phosphate = D-glyceraldehyde 3-phosphate + acetaldehyde. Its pathway is carbohydrate degradation; 2-deoxy-D-ribose 1-phosphate degradation; D-glyceraldehyde 3-phosphate and acetaldehyde from 2-deoxy-alpha-D-ribose 1-phosphate: step 2/2. Catalyzes a reversible aldol reaction between acetaldehyde and D-glyceraldehyde 3-phosphate to generate 2-deoxy-D-ribose 5-phosphate. The polypeptide is Deoxyribose-phosphate aldolase (Clostridium kluyveri (strain NBRC 12016)).